We begin with the raw amino-acid sequence, 574 residues long: Streptolysin O (574 aa).

The N-terminal stretch at 1-36 is a signal peptide; it reads MKDMSNKKIFKKYSRVAGLLTAALIVGNLVTANADS. The span at 37–52 shows a compositional bias: low complexity; it reads NKQNTANTETTTTNEQ. 2 disordered regions span residues 37 to 64 and 84 to 111; these read NKQNTANTETTTTNEQPKPESSELTTEK and KEMPLESAEKEEKKSEDNKKSEEDHTEE. Over residues 53 to 64 the composition is skewed to basic and acidic residues; the sequence is PKPESSELTTEK. A run of 4 beta stranded transmembrane segments spans residues 263–276, 283–292, 361–370, and 378–390; these read KSQIEAALNVNSKI, IDFKSISKGE, SNDVEAAFSA, and KTNGKYSDILENS. The short motif at 532–542 is the Conserved undecapeptide element; the sequence is ECTGLAWEWWR. Residues 564 to 565 carry the Cholesterol binding motif; sequence TL.

This sequence belongs to the cholesterol-dependent cytolysin family. In terms of assembly, homooligomeric pore complex of 35 to 50 subunits; when inserted in the host membrane.

The protein localises to the secreted. The protein resides in the host cell membrane. A cholesterol-dependent toxin that causes cytolysis by forming pores in cholesterol containing host membranes. After binding to target membranes, the protein undergoes a major conformation change, leading to its insertion in the host membrane and formation of an oligomeric pore complex. Cholesterol is required for binding to host membranes, membrane insertion and pore formation; cholesterol binding is mediated by a Thr-Leu pair in the C-terminus. Can be reversibly inactivated by oxidation. The protein is Streptolysin O (slo) of Streptococcus dysgalactiae subsp. equisimilis (Streptococcus equisimilis).